An 870-amino-acid chain; its full sequence is Probable disease resistance protein At1g59620 (870 aa).

The NB-ARC domain occupies aspartate 123–tyrosine 432. Glycine 167–threonine 174 contacts ATP. 6 LRR repeats span residues leucine 543 to leucine 567, isoleucine 568 to leucine 590, methionine 703 to proline 726, proline 735 to lysine 758, leucine 759 to glutamine 786, and methionine 808 to threonine 833.

Belongs to the disease resistance NB-LRR family.

Its function is as follows. Probable disease resistance protein. In Arabidopsis thaliana (Mouse-ear cress), this protein is Probable disease resistance protein At1g59620.